The primary structure comprises 417 residues: MIDLQLLREDPDVVRRSQLSRGEDPALVDALLTADTARRAAISAADSLRAEQKATSKSLGAASAEDRPALLERAKDLAEQVKAAETTQAETAAAFAAAYMAISNVVLDGVPTGGKDDYAVLDIVGDPPPLSNPKDHLELGEALGLIDMQRGAKVSGSRFYFLTGRGALLQLGLLQLALRLAVENDFIPMIPPVLVRPEVMSGTGFLGAHAEEVYRVDDLYLVGTSEVPMAGYHSDEILDLSVGPLRYAGWSSCFRREAGSHGKDTRGIIRVHQFDKVEGFVYCAPTDAEVEHQRLLGWQREMLARIEVPYRVIDVAAGDLGSSAARKFDCEAWVPTQGSYCELTSTSNCTTFQARRLATRYRDASGKPQIVATLNGTLGTTRWLVAILENHQRPDGSVRVPPALVPFVGTELLESPR.

L-serine is bound at residue T224–E226. ATP contacts are provided by residues R255–E257 and V271. E278 lines the L-serine pocket. Residue E342–S345 participates in ATP binding. T377 contacts L-serine.

Belongs to the class-II aminoacyl-tRNA synthetase family. Type-1 seryl-tRNA synthetase subfamily. In terms of assembly, homodimer. The tRNA molecule binds across the dimer.

The protein resides in the cytoplasm. It catalyses the reaction tRNA(Ser) + L-serine + ATP = L-seryl-tRNA(Ser) + AMP + diphosphate + H(+). It carries out the reaction tRNA(Sec) + L-serine + ATP = L-seryl-tRNA(Sec) + AMP + diphosphate + H(+). The protein operates within aminoacyl-tRNA biosynthesis; selenocysteinyl-tRNA(Sec) biosynthesis; L-seryl-tRNA(Sec) from L-serine and tRNA(Sec): step 1/1. Catalyzes the attachment of serine to tRNA(Ser). Is also able to aminoacylate tRNA(Sec) with serine, to form the misacylated tRNA L-seryl-tRNA(Sec), which will be further converted into selenocysteinyl-tRNA(Sec). This is Serine--tRNA ligase from Mycobacterium leprae (strain TN).